Consider the following 138-residue polypeptide: Endoribonuclease YbeY (138 aa).

His106, His110, and Asp116 together coordinate Zn(2+).

Belongs to the endoribonuclease YbeY family. Requires Zn(2+) as cofactor.

The protein resides in the cytoplasm. In terms of biological role, single strand-specific metallo-endoribonuclease involved in late-stage 70S ribosome quality control and in maturation of the 3' terminus of the 16S rRNA. The sequence is that of Endoribonuclease YbeY from Phocaeicola vulgatus (strain ATCC 8482 / DSM 1447 / JCM 5826 / CCUG 4940 / NBRC 14291 / NCTC 11154) (Bacteroides vulgatus).